Reading from the N-terminus, the 146-residue chain is Large ribosomal subunit protein uL15 (146 aa).

Basic and acidic residues predominate over residues 1 to 13 (MKLHELKPAEGSR). The tract at residues 1–47 (MKLHELKPAEGSRKSRKRIGRGTGSGLGRNAGKGEKGQKARAGGGVR) is disordered. Positions 21-31 (RGTGSGLGRNA) are enriched in gly residues.

It belongs to the universal ribosomal protein uL15 family. In terms of assembly, part of the 50S ribosomal subunit.

Functionally, binds to the 23S rRNA. The protein is Large ribosomal subunit protein uL15 of Clostridium kluyveri (strain NBRC 12016).